Consider the following 230-residue polypeptide: UPF0502 protein Patl_1161 (230 aa).

It belongs to the UPF0502 family.

This chain is UPF0502 protein Patl_1161, found in Pseudoalteromonas atlantica (strain T6c / ATCC BAA-1087).